The following is a 250-amino-acid chain: uncharacterized protein (250 aa).

6 4Fe-4S ferredoxin-type domains span residues 38-67 (KLLYINETKCIRCNLCYKECPVDAIEKAKV), 69-98 (KSAKIIEDKCVKCEICAQTCPVGAIYVIEG), 124-153 (KKYELDENTCIKCGICARFCPTNAIKAVRR), 154-183 (KSIEVNLDLCMGCGACAEVCPKKCIKVERE), 191-220 (RDIEVDKNLCVGCLVCIEECPINAIDQDGD), and 220-249 (DKVKINKDKCILCGRCVDVCPTNAIKMWEK). The [4Fe-4S] cluster site is built by Cys47, Cys50, Cys53, Cys57, Cys78, Cys81, Cys84, Cys88, Cys133, Cys136, Cys139, Cys143, Cys163, Cys166, Cys169, Cys173, Cys200, Cys203, Cys206, Cys210, Cys229, Cys232, Cys235, and Cys239.

This is an uncharacterized protein from Methanocaldococcus jannaschii (strain ATCC 43067 / DSM 2661 / JAL-1 / JCM 10045 / NBRC 100440) (Methanococcus jannaschii).